A 385-amino-acid chain; its full sequence is tRNA(Met) cytidine acetate ligase (385 aa).

Residues 7-20 (VAEY…HEFL), Gly-101, Asn-153, and Arg-178 each bind ATP.

Belongs to the TmcAL family.

The protein localises to the cytoplasm. It catalyses the reaction cytidine(34) in elongator tRNA(Met) + acetate + ATP = N(4)-acetylcytidine(34) in elongator tRNA(Met) + AMP + diphosphate. Catalyzes the formation of N(4)-acetylcytidine (ac(4)C) at the wobble position of elongator tRNA(Met), using acetate and ATP as substrates. First activates an acetate ion to form acetyladenylate (Ac-AMP) and then transfers the acetyl group to tRNA to form ac(4)C34. The polypeptide is tRNA(Met) cytidine acetate ligase (Lactobacillus gasseri (strain ATCC 33323 / DSM 20243 / BCRC 14619 / CIP 102991 / JCM 1131 / KCTC 3163 / NCIMB 11718 / NCTC 13722 / AM63)).